The chain runs to 394 residues: Histidinol dehydrogenase (394 aa).

3 residues coordinate NAD(+): tyrosine 113, glutamine 172, and asparagine 195. 3 residues coordinate substrate: threonine 218, glutamine 240, and histidine 243. Zn(2+) is bound by residues glutamine 240 and histidine 243. Catalysis depends on proton acceptor residues glutamate 294 and histidine 295. 4 residues coordinate substrate: histidine 295, aspartate 327, glutamate 380, and histidine 385. Aspartate 327 is a Zn(2+) binding site. Position 385 (histidine 385) interacts with Zn(2+).

It belongs to the histidinol dehydrogenase family. Zn(2+) is required as a cofactor.

It carries out the reaction L-histidinol + 2 NAD(+) + H2O = L-histidine + 2 NADH + 3 H(+). Its pathway is amino-acid biosynthesis; L-histidine biosynthesis; L-histidine from 5-phospho-alpha-D-ribose 1-diphosphate: step 9/9. In terms of biological role, catalyzes the sequential NAD-dependent oxidations of L-histidinol to L-histidinaldehyde and then to L-histidine. The sequence is that of Histidinol dehydrogenase from Sulfurisphaera tokodaii (strain DSM 16993 / JCM 10545 / NBRC 100140 / 7) (Sulfolobus tokodaii).